Here is a 459-residue protein sequence, read N- to C-terminus: Phosphomethylpyrimidine synthase (459 aa).

Residues Asn80, Met109, Tyr139, His175, 195-197 (SRG), 236-239 (DSLR), and Glu275 each bind substrate. His279 serves as a coordination point for Zn(2+). Tyr302 serves as a coordination point for substrate. A Zn(2+)-binding site is contributed by His343. Cys423, Cys426, and Cys431 together coordinate [4Fe-4S] cluster.

It belongs to the ThiC family. [4Fe-4S] cluster is required as a cofactor.

It carries out the reaction 5-amino-1-(5-phospho-beta-D-ribosyl)imidazole + S-adenosyl-L-methionine = 4-amino-2-methyl-5-(phosphooxymethyl)pyrimidine + CO + 5'-deoxyadenosine + formate + L-methionine + 3 H(+). Its pathway is cofactor biosynthesis; thiamine diphosphate biosynthesis. Catalyzes the synthesis of the hydroxymethylpyrimidine phosphate (HMP-P) moiety of thiamine from aminoimidazole ribotide (AIR) in a radical S-adenosyl-L-methionine (SAM)-dependent reaction. The protein is Phosphomethylpyrimidine synthase of Prochlorococcus marinus (strain MIT 9303).